Consider the following 90-residue polypeptide: Acylphosphatase (90 aa).

The region spanning 5 to 90 (GCKVIVSGIV…YQKTNDFIAC (86 aa)) is the Acylphosphatase-like domain. Residues R20 and N38 contribute to the active site.

The protein belongs to the acylphosphatase family.

The catalysed reaction is an acyl phosphate + H2O = a carboxylate + phosphate + H(+). The polypeptide is Acylphosphatase (acyP) (Psychromonas ingrahamii (strain DSM 17664 / CCUG 51855 / 37)).